A 194-amino-acid chain; its full sequence is Casparian strip membrane protein 2 (194 aa).

Over 1 to 32 the chain is Cytoplasmic; it reads MSTTIDIPESSKVVKGKGVVAAPLRPGGWKKG. The chain crosses the membrane as a helical span at residues 33–53; sequence VAIMDFILRLGAIAAALGAAA. The Extracellular segment spans residues 54-82; that stretch reads TMGTSDQTLPFFTQFFQFEASYDSFTTFQ. A helical transmembrane segment spans residues 83-103; that stretch reads FFVITMALVGGYLVLSLPFSV. At 104 to 115 the chain is on the cytoplasmic side; sequence VAIIRPHAVGPR. Residues 116 to 136 traverse the membrane as a helical segment; the sequence is LFLIILDTVFLTLATASAASA. Residues 137–168 are Extracellular-facing; sequence AAVVYLAHNGDQDTNWLAICNQFGDFCAQTSS. A helical membrane pass occupies residues 169 to 189; it reads AVVSSFVAVVVFVLLIVMSAL. The Cytoplasmic portion of the chain corresponds to 190–194; the sequence is AMGKP.

Belongs to the Casparian strip membrane proteins (CASP) family. As to quaternary structure, homodimer and heterodimers.

The protein localises to the cell membrane. Functionally, regulates membrane-cell wall junctions and localized cell wall deposition. Required for establishment of the Casparian strip membrane domain (CSD) and the subsequent formation of Casparian strips, a cell wall modification of the root endodermis that determines an apoplastic barrier between the intraorganismal apoplasm and the extraorganismal apoplasm and prevents lateral diffusion. The chain is Casparian strip membrane protein 2 from Vigna unguiculata (Cowpea).